A 230-amino-acid polypeptide reads, in one-letter code: Probable caffeoyl-CoA O-methyltransferase 1 (230 aa).

Residues threonine 52, aspartate 74, glycine 76–valine 77, serine 82, aspartate 100, alanine 129, aspartate 151, aspartate 153, and tyrosine 160 each bind S-adenosyl-L-methionine. An a divalent metal cation-binding site is contributed by aspartate 151. Positions 177 and 178 each coordinate a divalent metal cation.

It belongs to the class I-like SAM-binding methyltransferase superfamily. Cation-dependent O-methyltransferase family. CCoAMT subfamily.

It carries out the reaction (E)-caffeoyl-CoA + S-adenosyl-L-methionine = (E)-feruloyl-CoA + S-adenosyl-L-homocysteine + H(+). This is Probable caffeoyl-CoA O-methyltransferase 1 (omt5) from Dictyostelium discoideum (Social amoeba).